Consider the following 60-residue polypeptide: MAQIKITLTKSPIGRIPSQRKTVVALGLGKLNSFVIKEDNAAIRGMITAVSHLVTVEEVN.

Belongs to the universal ribosomal protein uL30 family. As to quaternary structure, part of the 50S ribosomal subunit.

The sequence is that of Large ribosomal subunit protein uL30 from Streptococcus pneumoniae (strain Hungary19A-6).